The chain runs to 393 residues: Formate-dependent phosphoribosylglycinamide formyltransferase (393 aa).

N(1)-(5-phospho-beta-D-ribosyl)glycinamide contacts are provided by residues 22-23 (EL) and Glu-82. ATP contacts are provided by residues Arg-114, Lys-155, 160–165 (SSGHGQ), 195–198 (EGFV), and Glu-203. An ATP-grasp domain is found at 119 to 308 (RLAAEELGLP…EFALHARAIL (190 aa)). Mg(2+) contacts are provided by Glu-267 and Glu-279. N(1)-(5-phospho-beta-D-ribosyl)glycinamide contacts are provided by residues Asp-286, Lys-356, and 363–364 (RR).

The protein belongs to the PurK/PurT family. Homodimer.

The catalysed reaction is N(1)-(5-phospho-beta-D-ribosyl)glycinamide + formate + ATP = N(2)-formyl-N(1)-(5-phospho-beta-D-ribosyl)glycinamide + ADP + phosphate + H(+). It functions in the pathway purine metabolism; IMP biosynthesis via de novo pathway; N(2)-formyl-N(1)-(5-phospho-D-ribosyl)glycinamide from N(1)-(5-phospho-D-ribosyl)glycinamide (formate route): step 1/1. Functionally, involved in the de novo purine biosynthesis. Catalyzes the transfer of formate to 5-phospho-ribosyl-glycinamide (GAR), producing 5-phospho-ribosyl-N-formylglycinamide (FGAR). Formate is provided by PurU via hydrolysis of 10-formyl-tetrahydrofolate. The sequence is that of Formate-dependent phosphoribosylglycinamide formyltransferase from Mannheimia succiniciproducens (strain KCTC 0769BP / MBEL55E).